The primary structure comprises 506 residues: Glutamate--tRNA ligase (506 aa).

Positions 29–39 (PSPTGTPHVGL) match the 'HIGH' region motif. Positions 273 to 277 (KLSKR) match the 'KMSKS' region motif. K276 serves as a coordination point for ATP.

This sequence belongs to the class-I aminoacyl-tRNA synthetase family. Glutamate--tRNA ligase type 1 subfamily. In terms of assembly, monomer.

The protein localises to the cytoplasm. It catalyses the reaction tRNA(Glu) + L-glutamate + ATP = L-glutamyl-tRNA(Glu) + AMP + diphosphate. Functionally, catalyzes the attachment of glutamate to tRNA(Glu) in a two-step reaction: glutamate is first activated by ATP to form Glu-AMP and then transferred to the acceptor end of tRNA(Glu). This chain is Glutamate--tRNA ligase, found in Paenarthrobacter aurescens (strain TC1).